The following is a 221-amino-acid chain: Potassium voltage-gated channel subfamily E member 4 (221 aa).

The Extracellular portion of the chain corresponds to Met1–Glu86. N-linked (GlcNAc...) asparagine glycosylation is present at Asn9. Positions Leu58–Leu72 are enriched in polar residues. The disordered stretch occupies residues Leu58–Ala77. The helical transmembrane segment at Tyr87–Gly107 threads the bilayer. At Tyr108–Ser221 the chain is on the cytoplasmic side. Residues Ser175–Ser221 form a disordered region. The segment covering Glu192–Ser202 has biased composition (acidic residues). Polar residues predominate over residues Glu203 to Ser221.

It belongs to the potassium channel KCNE family. As to quaternary structure, forms heterooligomers with KCNA3, inhibiting its activity by impairing localization to the cell membrane. The stoichiometry of KCNA3 and KCNE4 in the heterooligomers are 4:1, 4:2, 4:3 or 4:4 respectively. Increasing the number of KCNE4 subunits steadily slows the activation KCNA3 and decreases its abundance at the cell membrane. However, a single subunit of KCNE4 is sufficient for the cooperative enhancement of the inactivating function of the channel. However, a single subunit of KCNE4 is sufficient for the cooperative enhancement of the inactivating function of the channel. Interacts with KCNQ1; impairs KCNQ1 localization in lipid rafts and inhibits voltage-gated potassium channel activity. As to expression, predominantly expressed in embryo and adult uterus. Low expression found in kidney, small intestine, lung and heart. Detected in kidney, thymus, and uterus (at protein level).

It localises to the membrane. In terms of biological role, ancillary protein that functions as a regulatory subunit of the voltage-gated potassium (Kv) channel complex composed of pore-forming and potassium-conducting alpha subunits and of regulatory beta subunits. KCNE4 beta subunit modulates the gating kinetics and enhances stability of the channel complex. Associates with KCNQ1/KVLTQ1 alpha subunit to inhibit potassium currents. May inhibit KCNQ4-mediated potassium currents. The chain is Potassium voltage-gated channel subfamily E member 4 from Homo sapiens (Human).